Here is a 508-residue protein sequence, read N- to C-terminus: tRNA-2-methylthio-N(6)-dimethylallyladenosine synthase (508 aa).

Residues 1–21 (MNEEQRKASGQVSSSDKKSEK) form a disordered region. Residues 65 to 183 (RKFYIRTYGC…LPELLSECYL (119 aa)) form the MTTase N-terminal domain. Residues Cys74, Cys110, Cys144, Cys220, Cys224, and Cys227 each contribute to the [4Fe-4S] cluster site. The Radical SAM core domain occupies 206-436 (RQGKIKGWVN…NALVNEISAK (231 aa)). The TRAM domain maps to 439 to 502 (KEYEGQTVEV…TWSLDGEMVG (64 aa)).

Belongs to the methylthiotransferase family. MiaB subfamily. Monomer. It depends on [4Fe-4S] cluster as a cofactor.

It localises to the cytoplasm. It catalyses the reaction N(6)-dimethylallyladenosine(37) in tRNA + (sulfur carrier)-SH + AH2 + 2 S-adenosyl-L-methionine = 2-methylsulfanyl-N(6)-dimethylallyladenosine(37) in tRNA + (sulfur carrier)-H + 5'-deoxyadenosine + L-methionine + A + S-adenosyl-L-homocysteine + 2 H(+). Catalyzes the methylthiolation of N6-(dimethylallyl)adenosine (i(6)A), leading to the formation of 2-methylthio-N6-(dimethylallyl)adenosine (ms(2)i(6)A) at position 37 in tRNAs that read codons beginning with uridine. This is tRNA-2-methylthio-N(6)-dimethylallyladenosine synthase from Bacillus pumilus (strain SAFR-032).